A 388-amino-acid chain; its full sequence is Homeobox protein Hox-A13 (388 aa).

A DNA-binding region (homeobox) is located at residues 322-381 (GRKKRVPYTKVQLKELEREYATNKFITKDKRRRISATTNLSERQVTIWFQNRRVKEKKVI).

This sequence belongs to the Abd-B homeobox family. In terms of assembly, binds DNA as a homodimer. Interacts with MEIS1, MEIS2 and MEIS3.

Its subcellular location is the nucleus. Functionally, sequence-specific, AT-rich binding transcription factor which is part of a developmental regulatory system that provides cells with specific positional identities on the anterior-posterior axis. Sequence-specific transcription factor which is part of a developmental regulatory system that provides cells with specific positional identities on the anterior-posterior axis. This is Homeobox protein Hox-A13 (HOXA13) from Homo sapiens (Human).